We begin with the raw amino-acid sequence, 100 residues long: UPF0213 protein YhbQ (100 aa).

The 76-residue stretch at 2–77 (TPWYLYLIRT…KQLTKRQKER (76 aa)) folds into the GIY-YIG domain.

It belongs to the UPF0213 family.

This chain is UPF0213 protein YhbQ, found in Salmonella arizonae (strain ATCC BAA-731 / CDC346-86 / RSK2980).